The following is a 1227-amino-acid chain: Splicing factor 3B subunit 3 (1227 aa).

It belongs to the RSE1 family. Identified in the spliceosome A complex; remains associated with the spliceosome throughout the splicing process. Component of the spliceosome B complex. Identified in the spliceosome C complex. Identified in the spliceosome E complex. Component of the U11/U12 snRNPs that are part of the U12-type spliceosome. Component of splicing factor SF3B complex. Identified in the SAGA transcription regulatory histone acetylation (HAT) complex; the interaction is RNA-independent.

The protein localises to the nucleus. In terms of biological role, involved in pre-mRNA splicing as a component of the splicing factor SF3B complex, a constituent of the spliceosome. SF3B complex is required for 'A' complex assembly formed by the stable binding of U2 snRNP to the branchpoint sequence (BPS) in pre-mRNA. Sequence independent binding of SF3A/SF3B complex upstream of the branch site is essential, it may anchor U2 snRNP to the pre-mRNA. May also be involved in the assembly of the 'E' complex. Also belongs to the minor U12-dependent spliceosome, which is involved in the splicing of rare class of nuclear pre-mRNA intron. The chain is Splicing factor 3B subunit 3 from Drosophila melanogaster (Fruit fly).